Here is a 604-residue protein sequence, read N- to C-terminus: Threonine--tRNA ligase (604 aa).

The interval 197 to 499 (DHRKLGRELG…LIEEYAGDFP (303 aa)) is catalytic. Positions 296, 347, and 476 each coordinate Zn(2+).

This sequence belongs to the class-II aminoacyl-tRNA synthetase family. Homodimer. The cofactor is Zn(2+).

It localises to the cytoplasm. It carries out the reaction tRNA(Thr) + L-threonine + ATP = L-threonyl-tRNA(Thr) + AMP + diphosphate + H(+). Its function is as follows. Catalyzes the attachment of threonine to tRNA(Thr) in a two-step reaction: L-threonine is first activated by ATP to form Thr-AMP and then transferred to the acceptor end of tRNA(Thr). Also edits incorrectly charged L-seryl-tRNA(Thr). This is Threonine--tRNA ligase from Synechococcus elongatus (strain ATCC 33912 / PCC 7942 / FACHB-805) (Anacystis nidulans R2).